Reading from the N-terminus, the 109-residue chain is Homeobox protein E60 (109 aa).

Residues 1–31 form a disordered region; it reads PRTRRVKRSDGRGNGGTPEEKRPRTAFSGEQ. A DNA-binding region (homeobox) is located at residues 20–79; sequence EKRPRTAFSGEQLARLKREFAENRYLTERRRQQLSRDLGLNEAQIKIWFQNKRAKIKKAS.

This sequence belongs to the engrailed homeobox family.

Its subcellular location is the nucleus. In Apis mellifera (Honeybee), this protein is Homeobox protein E60.